The chain runs to 492 residues: Fibroblast growth factor receptor substrate 3 (492 aa).

Residue Gly2 is the site of N-myristoyl glycine attachment. Residues 13–115 (VPHNHPTKFK…QCNSINVTEE (103 aa)) form the IRS-type PTB domain. 3 disordered regions span residues 125 to 205 (PQEL…EDRR), 337 to 413 (QQLR…EPPR), and 425 to 492 (WGTA…DLPL). Composition is skewed to polar residues over residues 133–147 (GSSQPTGYTVSSFSN) and 166–185 (PSTSSLRHPSPGEESTQTLI). Residues 374 to 385 (TSTRASARSHSS) show a composition bias toward low complexity.

Binds NTRK1, FGFR1, NGFR, GRB2, PTPN11 and ERK2. Post-translationally, phosphorylated on tyrosine residues upon stimulation by BFGF or NGFB.

It localises to the membrane. In terms of biological role, adapter protein that links FGF and NGF receptors to downstream signaling pathways. Involved in the activation of MAP kinases. Down-regulates ERK2 signaling by interfering with the phosphorylation and nuclear translocation of ERK2. The polypeptide is Fibroblast growth factor receptor substrate 3 (Frs3) (Rattus norvegicus (Rat)).